The primary structure comprises 25 residues: Neuromedin-U-25 (25 aa).

Position 25 is an asparagine amide (Asn-25).

Belongs to the NmU family.

Its subcellular location is the secreted. In terms of biological role, stimulates uterine smooth muscle contraction and causes selective vasoconstriction. This chain is Neuromedin-U-25 (NMU), found in Sus scrofa (Pig).